The primary structure comprises 202 residues: Ras-related protein Rab-18 (202 aa).

GTP contacts are provided by Ser20, Gly23, Lys24, Ser25, Ser26, Asp37, Pro38, Thr43, Gly69, Lys126, Asp128, and Ala155. The Effector region signature appears at 40–48 (QAATIGVDF). Residues 183 to 202 (RPTFRLGQPTDTSSGNLCGC) are disordered. Polar residues predominate over residues 191–202 (PTDTSSGNLCGC). Residues Cys200 and Cys202 are each lipidated (S-geranylgeranyl cysteine). Cys202 bears the Cysteine methyl ester mark.

Belongs to the small GTPase superfamily. Rab family.

It catalyses the reaction GTP + H2O = GDP + phosphate + H(+). Functionally, the small GTPases Rab are key regulators of intracellular membrane trafficking, from the formation of transport vesicles to their fusion with membranes. Rabs cycle between an inactive GDP-bound form and an active GTP-bound form that is able to recruit to membranes different sets of downstream effectors directly responsible for vesicle formation, movement, tethering and fusion. Plays a role in apical endocytosis/recycling. May be implicated in transport between the plasma membrane and early endosomes. This chain is Ras-related protein Rab-18 (rab-18), found in Caenorhabditis briggsae.